The chain runs to 439 residues: Gnt-II system L-idonate transporter (439 aa).

The Periplasmic portion of the chain corresponds to 1–11; that stretch reads MPLIIIAAGVA. Residues 12–34 traverse the membrane as a helical segment; sequence LLLILMIGFKVNGFIALVLVAAV. At 35–53 the chain is on the cytoplasmic side; it reads VGFAEGMDAQAVLHSIQNG. A helical transmembrane segment spans residues 54-76; it reads IGSTLGGLAMILGFGAMLGKLIS. At 77–96 the chain is on the periplasmic side; it reads DTGAAQRIATTLIATFGKKR. Residues 97-114 form a helical membrane-spanning segment; sequence VQWALVITGLVVGLAMFF. The Cytoplasmic portion of the chain corresponds to 115–118; it reads EVGF. The chain crosses the membrane as a helical span at residues 119–141; that stretch reads VLLLPLVFTIVASSGLPLLYVGV. Topologically, residues 142-170 are periplasmic; the sequence is PMVAALSVTHCFLPPHPGPTAIATIFEAN. The chain crosses the membrane as a helical span at residues 171-193; sequence LGTTLLYGFIITIPTVIVAGPLF. Residues 194–218 are Cytoplasmic-facing; that stretch reads SKLLTRFEKAPPEGLFNPHLFSEEE. Residues 219-241 form a helical membrane-spanning segment; the sequence is MPSFWNSIFAAVIPVILMAIAAV. At 242–253 the chain is on the periplasmic side; the sequence is CEITLPKTNTVR. A helical membrane pass occupies residues 254–276; that stretch reads LFFEFVGNPAVALFIAIVIAIFT. Topologically, residues 277–290 are cytoplasmic; it reads LGRRNGRTIEQIMD. A helical membrane pass occupies residues 291 to 310; sequence IIGDSIGAIAMIVFIIAGGG. Residues 311-322 are Periplasmic-facing; the sequence is AFKQVLVDSGVG. Residues 323–345 traverse the membrane as a helical segment; it reads HYISHLMTGTTLSPLLMCWTVAA. The Cytoplasmic segment spans residues 346–348; it reads LLR. The chain crosses the membrane as a helical span at residues 349–371; that stretch reads IALGSATVAAITTAGVVLPIINV. Residues 372 to 377 lie on the Periplasmic side of the membrane; sequence THADPA. A helical transmembrane segment spans residues 378-400; the sequence is LMVLATGAGSVIASHVNDPGFWL. At 401 to 414 the chain is on the cytoplasmic side; the sequence is FKGYFNLTVGETLR. Residues 415–437 traverse the membrane as a helical segment; the sequence is TWTVMETLISIMGLLGVLAINAV. Residues 438-439 are Periplasmic-facing; that stretch reads LH.

The protein belongs to the GntP permease family.

The protein localises to the cell inner membrane. The enzyme catalyses L-idonate(in) + H(+)(in) = L-idonate(out) + H(+)(out). The catalysed reaction is D-gluconate(in) + H(+)(in) = D-gluconate(out) + H(+)(out). It catalyses the reaction 5-dehydro-D-gluconate(in) + H(+)(in) = 5-dehydro-D-gluconate(out) + H(+)(out). It participates in carbohydrate acid metabolism; L-idonate degradation. In terms of biological role, transporter which is probably involved in L-idonate metabolism. Transports L-idonate from the periplasm across the inner membrane. Can also transport D-gluconate and 5-keto-D-gluconate. It has been reported that gluconate uptake probably occurs via a proton-symport mechanism in E.coli. This Escherichia coli (strain K12) protein is Gnt-II system L-idonate transporter.